The sequence spans 355 residues: Glycerol-3-phosphate dehydrogenase [NAD(P)+] (355 aa).

NADPH is bound by residues S14, W15, R35, and K117. Positions 117, 147, and 149 each coordinate sn-glycerol 3-phosphate. A151 serves as a coordination point for NADPH. K202, D255, S265, R266, and N267 together coordinate sn-glycerol 3-phosphate. Catalysis depends on K202, which acts as the Proton acceptor. Residue R266 participates in NADPH binding. Residues I290 and E292 each contribute to the NADPH site.

Belongs to the NAD-dependent glycerol-3-phosphate dehydrogenase family.

The protein resides in the cytoplasm. The catalysed reaction is sn-glycerol 3-phosphate + NAD(+) = dihydroxyacetone phosphate + NADH + H(+). It catalyses the reaction sn-glycerol 3-phosphate + NADP(+) = dihydroxyacetone phosphate + NADPH + H(+). Its pathway is membrane lipid metabolism; glycerophospholipid metabolism. Functionally, catalyzes the reduction of the glycolytic intermediate dihydroxyacetone phosphate (DHAP) to sn-glycerol 3-phosphate (G3P), the key precursor for phospholipid synthesis. This chain is Glycerol-3-phosphate dehydrogenase [NAD(P)+], found in Lawsonia intracellularis (strain PHE/MN1-00).